Reading from the N-terminus, the 456-residue chain is N(6)-adenosine-methyltransferase non-catalytic subunit METTL14 (456 aa).

The segment at 50 to 75 (TCRASYDTSAPNAKRKYLDEGETDED) is disordered. Interaction with METTL3 stretches follow at residues 135–136 (RD) and 237–238 (SG). The positively charged region required for RNA-binding stretch occupies residues 245 to 254 (RVCLRKWGYR). Interaction with METTL3 regions lie at residues 255–258 (RCED) and 278–287 (KAVFQRTKEH). The tract at residues 297-298 (KR) is positively charged region required for RNA-binding. The interaction with METTL3 stretch occupies residues 308–312 (NVDID). Residues 393–456 (ERLRPKSPPP…GAHRGGFPPR (64 aa)) form a disordered region. Ser399 carries the post-translational modification Phosphoserine. The segment covering 409 to 423 (GGGAPRGGGRGGTSA) has biased composition (gly residues). The span at 425–440 (RGRERNRSNFRGERGG) shows a compositional bias: basic and acidic residues. Residues 441–450 (FRGGRGGAHR) are compositionally biased toward gly residues.

Belongs to the MT-A70-like family. In terms of assembly, heterodimer; heterodimerizes with METTL3 to form an antiparallel heterodimer that constitutes an active methyltransferase. Component of the WMM complex, a N6-methyltransferase complex composed of a catalytic subcomplex, named MAC, and of an associated subcomplex, named MACOM. The MAC subcomplex is composed of METTL3 and METTL14. The MACOM subcomplex is composed of WTAP, ZC3H13, CBLL1/HAKAI, VIRMA, and, in some cases of RBM15 (RBM15 or RBM15B).

The protein resides in the nucleus. The METTL3-METTL14 heterodimer forms a N6-methyltransferase complex that methylates adenosine residues at the N(6) position of some mRNAs and regulates the circadian clock, differentiation of embryonic stem cells and cortical neurogenesis. In the heterodimer formed with METTL3, METTL14 constitutes the RNA-binding scaffold that recognizes the substrate rather than the catalytic core. N6-methyladenosine (m6A), which takes place at the 5'-[AG]GAC-3' consensus sites of some mRNAs, plays a role in mRNA stability and processing. M6A acts as a key regulator of mRNA stability by promoting mRNA destabilization and degradation. In embryonic stem cells (ESCs), m6A methylation of mRNAs encoding key naive pluripotency-promoting transcripts results in transcript destabilization. M6A regulates spermatogonial differentiation and meiosis and is essential for male fertility and spermatogenesis. M6A also regulates cortical neurogenesis: m6A methylation of transcripts related to transcription factors, neural stem cells, the cell cycle and neuronal differentiation during brain development promotes their destabilization and decay, promoting differentiation of radial glial cells. This is N(6)-adenosine-methyltransferase non-catalytic subunit METTL14 from Homo sapiens (Human).